The sequence spans 199 residues: Thymidylate kinase (199 aa).

7–14 (GTEGVGKT) contributes to the ATP binding site.

It belongs to the thymidylate kinase family.

The enzyme catalyses dTMP + ATP = dTDP + ADP. Functionally, phosphorylation of dTMP to form dTDP in both de novo and salvage pathways of dTTP synthesis. This Acinetobacter baumannii (strain AB307-0294) protein is Thymidylate kinase.